The chain runs to 479 residues: Ribulose bisphosphate carboxylase large chain (479 aa).

Residues 1-2 constitute a propeptide that is removed on maturation; that stretch reads MS. An N-acetylproline modification is found at proline 3. Residues threonine 65, asparagine 123, 173-177, and 201-204 each bind substrate; these read TIKPK and KDDE. Lysine 175 serves as the catalytic Proton acceptor. Mg(2+) contacts are provided by lysine 201, aspartate 203, and glutamate 204. N6-carboxylysine is present on lysine 201. Serine 208 carries the phosphoserine modification. The active-site Proton acceptor is the histidine 294. Residues 294–295 and histidine 327 contribute to the substrate site; that span reads HR. A Phosphothreonine modification is found at threonine 330. Substrate contacts are provided by residues lysine 334 and 379–381; that span reads SGG.

It belongs to the RuBisCO large chain family. Type I subfamily. In terms of assembly, heterohexadecamer of 8 large chains and 8 small chains; disulfide-linked. The disulfide link is formed within the large subunit homodimers. Interacts with RBCX1 and RBCX1. An intermediate complex made of eight RbcL subunits interacts with the chaperone BSD2. Mg(2+) is required as a cofactor. Post-translationally, the disulfide bond which can form in the large chain dimeric partners within the hexadecamer appears to be associated with oxidative stress and protein turnover.

The protein localises to the plastid. The protein resides in the chloroplast. The catalysed reaction is 2 (2R)-3-phosphoglycerate + 2 H(+) = D-ribulose 1,5-bisphosphate + CO2 + H2O. It carries out the reaction D-ribulose 1,5-bisphosphate + O2 = 2-phosphoglycolate + (2R)-3-phosphoglycerate + 2 H(+). RuBisCO catalyzes two reactions: the carboxylation of D-ribulose 1,5-bisphosphate, the primary event in carbon dioxide fixation, as well as the oxidative fragmentation of the pentose substrate in the photorespiration process. Both reactions occur simultaneously and in competition at the same active site. Binds to abscisic acid (ABA). The sequence is that of Ribulose bisphosphate carboxylase large chain from Arabidopsis thaliana (Mouse-ear cress).